A 704-amino-acid chain; its full sequence is Elongation factor G (704 aa).

Residues 8–290 form the tr-type G domain; it reads EKYRNIGICA…GVVRYLPAPN (283 aa). GTP-binding positions include 17-24, 88-92, and 142-145; these read AHVDAGKT, DTPGH, and NKMD.

This sequence belongs to the TRAFAC class translation factor GTPase superfamily. Classic translation factor GTPase family. EF-G/EF-2 subfamily.

It localises to the cytoplasm. Its function is as follows. Catalyzes the GTP-dependent ribosomal translocation step during translation elongation. During this step, the ribosome changes from the pre-translocational (PRE) to the post-translocational (POST) state as the newly formed A-site-bound peptidyl-tRNA and P-site-bound deacylated tRNA move to the P and E sites, respectively. Catalyzes the coordinated movement of the two tRNA molecules, the mRNA and conformational changes in the ribosome. The polypeptide is Elongation factor G (Francisella tularensis subsp. holarctica (strain LVS)).